Here is an 884-residue protein sequence, read N- to C-terminus: Probable mixed-linked glucan synthase 9 (884 aa).

The segment covering 1–27 (MALSPAAAGRTGRNNNNDAGLADPLLP) has biased composition (low complexity). The tract at residues 1 to 34 (MALSPAAAGRTGRNNNNDAGLADPLLPAGGGGGG) is disordered. 2 helical membrane passes run 73–93 (VLLH…VLFL) and 104–124 (AMWL…TWLL). Residue Asp195 is part of the active site. Substrate is bound by residues Asp396 and Asp398. The active site involves Asp565. 6 consecutive transmembrane segments (helical) span residues 640-660 (TAYP…VIWL), 672-692 (FSTY…IGLV), 708-728 (EQFY…HIVL), 765-785 (LLAP…AAAG), 802-822 (AGLV…LGIM), and 830-850 (CALF…FVAV).

It belongs to the glycosyltransferase 2 family. Plant cellulose synthase-like F subfamily.

It is found in the golgi apparatus membrane. Its function is as follows. May catalyze both beta-1,3 and beta-1,4 glycosidic linkage on beta-D-glucan. Essential for (1,3;1,4)-beta-D-glucans synthesis in grasses and cereals (Poaceae). The mixed-linked glucans (which are not present in walls of dicotyledons or most other monocotyledonous plants) are particularly important constituents of the walls of the starchy endosperm and aleurone cells of cereal grains such as oats, wheat, rice and barley. They can account for up to 70% by weight of the wall. In Oryza sativa subsp. japonica (Rice), this protein is Probable mixed-linked glucan synthase 9 (CSLF9).